We begin with the raw amino-acid sequence, 65 residues long: MEGSKRKHDSRRLQQEQEQLRPRTPPSYEEIAKYGHSFNVKRFTNEEMCLKNDYPRIISYNPPPK.

The span at 1-10 (MEGSKRKHDS) shows a compositional bias: basic residues. The segment at 1 to 27 (MEGSKRKHDSRRLQQEQEQLRPRTPPS) is disordered. The span at 11-21 (RRLQQEQEQLR) shows a compositional bias: basic and acidic residues.

Belongs to the orthopoxvirus OPG052 family.

The polypeptide is Protein OPG052 (OPG052) (Bos taurus (Bovine)).